The following is a 175-amino-acid chain: Disulfide bond formation protein B (175 aa).

Over 1–13 the chain is Cytoplasmic; the sequence is MSKLVTFSQQRSA. A helical membrane pass occupies residues 14 to 30; it reads WLILMFSALGLEASALY. The Periplasmic segment spans residues 31-48; it reads FQYVMLLDPCVMCIYIRV. An intrachain disulfide couples cysteine 40 to cysteine 43. The chain crosses the membrane as a helical span at residues 49–64; it reads AVLGLILAGLVGSIAP. The Cytoplasmic portion of the chain corresponds to 65–71; it reads RFWIVRF. The chain crosses the membrane as a helical span at residues 72–89; the sequence is LGMSLWGVSSAWGAKLSF. The Periplasmic portion of the chain corresponds to 90–144; that stretch reads ELYQMQANPSPFSTCSFYPEFPTWMPLDAWMPSIFMPTGMCSDIPWTMMSLSMTQ. The cysteines at positions 104 and 130 are disulfide-linked. The helical transmembrane segment at 145-163 threads the bilayer; it reads WTLIAFVGYSIAFLLFIYP. Residues 164–175 lie on the Cytoplasmic side of the membrane; that stretch reads GLLYKKPTNPYS.

The protein belongs to the DsbB family.

The protein resides in the cell inner membrane. Required for disulfide bond formation in some periplasmic proteins. Acts by oxidizing the DsbA protein. In Shewanella denitrificans (strain OS217 / ATCC BAA-1090 / DSM 15013), this protein is Disulfide bond formation protein B.